The chain runs to 309 residues: Porphobilinogen deaminase (309 aa).

At cysteine 241 the chain carries S-(dipyrrolylmethanemethyl)cysteine.

This sequence belongs to the HMBS family. In terms of assembly, monomer. Dipyrromethane is required as a cofactor.

It catalyses the reaction 4 porphobilinogen + H2O = hydroxymethylbilane + 4 NH4(+). Its pathway is porphyrin-containing compound metabolism; protoporphyrin-IX biosynthesis; coproporphyrinogen-III from 5-aminolevulinate: step 2/4. Functionally, tetrapolymerization of the monopyrrole PBG into the hydroxymethylbilane pre-uroporphyrinogen in several discrete steps. The protein is Porphobilinogen deaminase of Bacillus cereus (strain G9842).